A 351-amino-acid chain; its full sequence is Ribonucleoside-diphosphate reductase subunit M2 B (351 aa).

Positions 1–31 (MGDPERPEAAGLDQDERSSSDTNENEIKSNE) are disordered. The Fe cation site is built by Asp100, Glu131, and His134. Residue Tyr138 is part of the active site. Glu194, Glu228, and His231 together coordinate Fe cation.

Belongs to the ribonucleoside diphosphate reductase small chain family. Heterotetramer with large (RRM1) subunit. Interacts with p53/TP53. Interacts with RRM1 in response to DNA damage. It depends on Fe cation as a cofactor.

It is found in the cytoplasm. Its subcellular location is the nucleus. It catalyses the reaction a 2'-deoxyribonucleoside 5'-diphosphate + [thioredoxin]-disulfide + H2O = a ribonucleoside 5'-diphosphate + [thioredoxin]-dithiol. In terms of biological role, plays a pivotal role in cell survival by repairing damaged DNA in a p53/TP53-dependent manner. Supplies deoxyribonucleotides for DNA repair in cells arrested at G1 or G2. Contains an iron-tyrosyl free radical center required for catalysis. Forms an active ribonucleotide reductase (RNR) complex with RRM1 which is expressed both in resting and proliferating cells in response to DNA damage. The chain is Ribonucleoside-diphosphate reductase subunit M2 B (RRM2B) from Pongo abelii (Sumatran orangutan).